A 494-amino-acid polypeptide reads, in one-letter code: Glutamate--tRNA ligase (494 aa).

The 'HIGH' region motif lies at 15-25 (PSPTGNPHVGL). The Zn(2+) site is built by Cys-112, Cys-114, Cys-139, and Glu-141. The 'KMSKS' region motif lies at 260–264 (KLSKR). Lys-263 lines the ATP pocket.

This sequence belongs to the class-I aminoacyl-tRNA synthetase family. Glutamate--tRNA ligase type 1 subfamily. In terms of assembly, monomer. Zn(2+) serves as cofactor.

The protein localises to the cytoplasm. The catalysed reaction is tRNA(Glu) + L-glutamate + ATP = L-glutamyl-tRNA(Glu) + AMP + diphosphate. Functionally, catalyzes the attachment of glutamate to tRNA(Glu) in a two-step reaction: glutamate is first activated by ATP to form Glu-AMP and then transferred to the acceptor end of tRNA(Glu). This chain is Glutamate--tRNA ligase, found in Streptomyces coelicolor (strain ATCC BAA-471 / A3(2) / M145).